The following is a 313-amino-acid chain: Olfactory receptor 4M2 (313 aa).

Residues 1-25 (METANYTKVTEFVLTGLSQTPEVQL) lie on the Cytoplasmic side of the membrane. The chain crosses the membrane as a helical span at residues 26-46 (VLFVIFLSFYLFILPGNILII). At 47–57 (CTISLDPHLTS) the chain is on the extracellular side. The chain crosses the membrane as a helical span at residues 58 to 78 (PMYFLLANLAFLDIWYSSITA). Topologically, residues 79 to 97 (PEMLIDFFVERKIISFDEC) are cytoplasmic. Residues cysteine 97 and cysteine 179 are joined by a disulfide bond. Residues 98–118 (IAQLFFLHFAGASEMFLLTVM) traverse the membrane as a helical segment. The Extracellular portion of the chain corresponds to 119–142 (AFDLYTAICRPLHYATIMNQRLCC). Residues 143 to 163 (ILVALSWRGGFIHSIIQVALI) traverse the membrane as a helical segment. At 164-204 (VRLPFCGPNELDSYFCDITQVVRIACANTFPEELVMICSSG) the chain is on the cytoplasmic side. Residues 205-225 (LISVVCLIALLMSYAFLLALL) traverse the membrane as a helical segment. The Extracellular portion of the chain corresponds to 226–238 (KKLSGSGENTNRA). A helical transmembrane segment spans residues 239-259 (VSTCYSHITIVVLMFGPSIYI). At 260-270 (YARPFDSFSLD) the chain is on the cytoplasmic side. A helical transmembrane segment spans residues 271 to 291 (KVVSVFNTLIFPLHNPIIYTL). Residues 292 to 313 (RNKEVKAAMRKLVTKYILCKEK) lie on the Extracellular side of the membrane.

This sequence belongs to the G-protein coupled receptor 1 family.

It is found in the membrane. In terms of biological role, odorant receptor. The chain is Olfactory receptor 4M2 from Homo sapiens (Human).